The sequence spans 1009 residues: MSRGQIIHSGHFMCSNPHDDLVQDEDEEDVEVDVVEDDDKSMEASSSVHHKNKALDEKPVTFYKFGVGKTQSIAIDVSLNKLNKCIKVAYNKMTTPKWKDFKGLRLHWKQRVRLNNVIWRAYYIEFRKKQPEKPKKPFCYFAVPDDDTTHQKIEGSIVEGMYWKRKMEGVCAQYKRWRIRSKHNLVTDKGGMVATCSSTSVSSMTGELKRKRKHTVPKETIESKLRSYEPPVKLQRSQTPKHTISDEFAWDFDDLDNVFTDDFLNSLSEPYMFPDPRDVYSGNNADIMQPGLLPLQPTIEDIMMSLGDDMPDSPPFHNDRDTMRTPTNDQPSISAQQIPQMRRSASSSASLHQMQVAQAQAQSISQISQPSQQLQHQIQIQQPVAARPHEFMASSIMMDYRLMPTRQSSAITSQMLMLSQSASTLSSQPQYATSTHYSTNNSFLPIRNTMTNQHHLGHTSQHSPWNKQQQSNFLVSLPHQSHVERILNNQPPLVPPPSRSNLLPTQNDPYLPQFLQSTQPTPQPQSHDPMMAPSRSWWLDSPLTASVQSPLSVATPLPLANQTGPQTPLGQLIGSADNGFLFGGNNTPGGFKMSGTTSGVPTLSQRLEQPPISRTSTIFGNVENKPERIFTSLTSQNTPTPSPLDISSLSRLRTSSLNESWKMSHIVEGSPTYQAFAASVTTKPSILESPSTSGDISGPASVPVQASQHPPKIITPPSASSKRKEQEAAMAPLVNRQQSCDVNLLNGKMAVKVEEKSGRHYLPTTPTELKEVTKEEPLLMSAPSSVKSMRRQAPDSTLHPEERKRILHLHAEQNRRSALKDGFDQLMDIIPDLYSGGVKPTNAVVLAKSADHIRRLQAEKWDKTQKIDEAKAKIEKLNQKITSLQSNLPQSSAPSSSSQVDSKTSLETFFDRYVKEGAKKNWRFWVMSQMLKPICVTQTNSFASSVAGDSSSRNEVAASCSDWLNKNWKATELRPLASTLLVSLATNSSILAEPDTLPDYVMQQLKNPF.

4 disordered regions span residues 1–20, 304–354, 488–531, and 686–728; these read MSRG…PHDD, MSLG…LHQM, NNQP…DPMM, and ILES…EQEA. Composition is skewed to polar residues over residues 324-350 and 499-508; these read RTPT…SSAS and RSNLLPTQND. Positions 511 to 526 are enriched in low complexity; the sequence is LPQFLQSTQPTPQPQS. Residues 686 to 695 show a composition bias toward polar residues; sequence ILESPSTSGD. Residues 803 to 856 enclose the bHLH domain; the sequence is RKRILHLHAEQNRRSALKDGFDQLMDIIPDLYSGGVKPTNAVVLAKSADHIRRL. A leucine-zipper region spans residues 856-877; sequence LQAEKWDKTQKIDEAKAKIEKL.

Expressed in intestine, neurons, muscle, hypodermis, excretory cell and other tissues.

The protein resides in the nucleus. It localises to the cytoplasm. Its subcellular location is the mitochondrion. Its function is as follows. Transcription factor that binds to the E box motif 5'-CACGTG-3', probably in a heterodimeric complex with mxl-2. Involved in modulating longevity in response to TOR signaling, dietary restriction, the decline in protein homeostasis associated with normal aging, germline signaling and the insulin-like signaling pathway. Plays a role in autophagy. Involved in regulating migration of the ray 1 precursor cells in the male tail, acting in concert with Wnt and semaphorin signaling pathways. Regulates transcription of genes encoding extracellular matrix (ECM) components which may contribute to the substratum required for migration of the neighboring ray 1 precursor cells. Involved in repressing infection by the microsporidian pathogen N.parisii, probably acting independently of its canonical partner, mxl-2. The protein is Protein WBSCR14 homolog (mml-1) of Caenorhabditis elegans.